The primary structure comprises 372 residues: N-methyl-L-tryptophan oxidase (372 aa).

Residue 4-34 (DLIIIGSGSVGAAAGYYATRAGLNVLMTDAH) participates in FAD binding. An S-8alpha-FAD cysteine modification is found at Cys308.

The protein belongs to the MSOX/MTOX family. MTOX subfamily. Monomer. FAD serves as cofactor.

It catalyses the reaction N(alpha)-methyl-L-tryptophan + O2 + H2O = L-tryptophan + formaldehyde + H2O2. Its function is as follows. Catalyzes the oxidative demethylation of N-methyl-L-tryptophan. The polypeptide is N-methyl-L-tryptophan oxidase (Escherichia coli O17:K52:H18 (strain UMN026 / ExPEC)).